We begin with the raw amino-acid sequence, 477 residues long: GTPase Der (477 aa).

EngA-type G domains are found at residues 3–167 (LTIA…GKER) and 206–382 (LRIA…RMWN). GTP is bound by residues 9–16 (GRPNVGKS), 56–60 (DTAGL), 119–122 (NKSE), 212–219 (GRPNTGKS), 259–263 (DTAGL), and 324–327 (NKWD). Residues 383–467 (RRISTAKLNR…PIRISLRASD (85 aa)) enclose the KH-like domain.

It belongs to the TRAFAC class TrmE-Era-EngA-EngB-Septin-like GTPase superfamily. EngA (Der) GTPase family. Associates with the 50S ribosomal subunit.

In terms of biological role, GTPase that plays an essential role in the late steps of ribosome biogenesis. The protein is GTPase Der of Bartonella quintana (strain Toulouse) (Rochalimaea quintana).